We begin with the raw amino-acid sequence, 69 residues long: uncharacterized protein (69 aa).

The protein localises to the mitochondrion. This is an uncharacterized protein from Marchantia polymorpha (Common liverwort).